The following is a 377-amino-acid chain: N5-carboxyaminoimidazole ribonucleotide synthase (377 aa).

Residues Arg93, Lys133, 138–144 (GYDGKGQ), 175–178 (EEFV), Glu183, His206, and 257–258 (NE) each bind ATP. In terms of domain architecture, ATP-grasp spans 97–287 (KALLDNAGVR…QFENHLRAVC (191 aa)).

This sequence belongs to the PurK/PurT family. Homodimer.

It catalyses the reaction 5-amino-1-(5-phospho-beta-D-ribosyl)imidazole + hydrogencarbonate + ATP = 5-carboxyamino-1-(5-phospho-D-ribosyl)imidazole + ADP + phosphate + 2 H(+). It functions in the pathway purine metabolism; IMP biosynthesis via de novo pathway; 5-amino-1-(5-phospho-D-ribosyl)imidazole-4-carboxylate from 5-amino-1-(5-phospho-D-ribosyl)imidazole (N5-CAIR route): step 1/2. In terms of biological role, catalyzes the ATP-dependent conversion of 5-aminoimidazole ribonucleotide (AIR) and HCO(3)(-) to N5-carboxyaminoimidazole ribonucleotide (N5-CAIR). This Vibrio parahaemolyticus serotype O3:K6 (strain RIMD 2210633) protein is N5-carboxyaminoimidazole ribonucleotide synthase.